The following is a 95-amino-acid chain: Alpha-defensin 20 (95 aa).

The first 19 residues, 1-19 (MKTLVLLSALVLLAFQVQA), serve as a signal peptide directing secretion. The propeptide occupies 20–58 (DPIQNTDEETNTEEQPGEEDQAVSVSFGDPEGSALHEKS). The disordered stretch occupies residues 22 to 57 (IQNTDEETNTEEQPGEEDQAVSVSFGDPEGSALHEK). Acidic residues predominate over residues 25–40 (TDEETNTEEQPGEEDQ). Intrachain disulfides connect Cys-64–Cys-89, Cys-66–Cys-81, and Cys-71–Cys-88.

Belongs to the alpha-defensin family.

The protein localises to the secreted. May have microbicidal activities. The chain is Alpha-defensin 20 (Defa20) from Mus musculus (Mouse).